Here is a 671-residue protein sequence, read N- to C-terminus: Bifunctional acetylxylan esterase/xylanase XynS20E (671 aa).

A signal peptide spans 1–19; the sequence is MRLGVALSTIAVLLTATSA. Positions 54 to 279 are acetylxylan esterase; that stretch reads QGAGRDIHVY…IQDIWDFVSQ (226 aa). The active-site Charge relay system is the serine 152. Asparagine 238 carries an N-linked (GlcNAc...) asparagine glycan. Residues 285 to 328 are disordered; the sequence is PVSASGNGGGNTTPTNPSTGGNGNGNGGGNTTPTNPSTGGNGNG. Residues 304–314 show a composition bias toward gly residues; it reads GGNGNGNGGGN. CBM10 domains follow at residues 335–374 and 383–422; these read KCSS…CGCG and TCSA…CGCG. Asparagine 339 carries an N-linked (GlcNAc...) asparagine glycan. N-linked (GlcNAc...) asparagine glycosylation is found at asparagine 445 and asparagine 483. The 201-residue stretch at 461–661 folds into the GH11 domain; sequence TVTSNKVGDI…NNGGTSGTAD (201 aa). The active-site Nucleophile is the glutamate 555. Glutamate 648 (proton donor) is an active-site residue.

The protein in the N-terminal section; belongs to the axeA family. This sequence in the C-terminal section; belongs to the glycosyl hydrolase 11 (cellulase G) family.

The protein localises to the secreted. It catalyses the reaction Deacetylation of xylans and xylo-oligosaccharides.. The enzyme catalyses Endohydrolysis of (1-&gt;4)-beta-D-xylosidic linkages in xylans.. Its pathway is glycan degradation; xylan degradation. Its function is as follows. Bifunctional acetylxylan esterase/xylanase involved in the hydrolysis of xylan, a major structural heterogeneous polysaccharide found in plant biomass representing the second most abundant polysaccharide in the biosphere, after cellulose. Degrades xylan from acetylxylan, beechwood, birchwood, and oat spelt, and releases acetate from 4-methylumbelliferyl acetate and beta-D-xylose tetraacetate. No activity is observed against carboxy methyl cellulose, beta-glucan, p-nitrophenol acetate, p-nitrophenol laurate, p-nitrophenol myristate, p-nitrophenol, palmitate, or beta-naphthol acetate. The protein is Bifunctional acetylxylan esterase/xylanase XynS20E (xynS20E) of Neocallimastix patriciarum (Rumen fungus).